Reading from the N-terminus, the 224-residue chain is UPF0758 protein VSAL_I0192 (224 aa).

The 123-residue stretch at Ala102–Ile224 folds into the MPN domain. The Zn(2+) site is built by His173, His175, and Asp186. The JAMM motif motif lies at His173–Asp186.

Belongs to the UPF0758 family.

The chain is UPF0758 protein VSAL_I0192 from Aliivibrio salmonicida (strain LFI1238) (Vibrio salmonicida (strain LFI1238)).